A 259-amino-acid polypeptide reads, in one-letter code: Protein-L-isoaspartate O-methyltransferase 1 (259 aa).

The active site involves Ser-109.

Belongs to the methyltransferase superfamily. L-isoaspartyl/D-aspartyl protein methyltransferase family.

It localises to the cytoplasm. The catalysed reaction is [protein]-L-isoaspartate + S-adenosyl-L-methionine = [protein]-L-isoaspartate alpha-methyl ester + S-adenosyl-L-homocysteine. Catalyzes the methyl esterification of L-isoaspartyl residues in peptides and proteins that result from spontaneous decomposition of normal L-aspartyl and L-asparaginyl residues. It plays a role in the repair and/or degradation of damaged proteins. The protein is Protein-L-isoaspartate O-methyltransferase 1 of Cupriavidus necator (strain ATCC 17699 / DSM 428 / KCTC 22496 / NCIMB 10442 / H16 / Stanier 337) (Ralstonia eutropha).